The chain runs to 128 residues: Large ribosomal subunit protein uL22 (128 aa).

The protein belongs to the universal ribosomal protein uL22 family. Part of the 50S ribosomal subunit.

This protein binds specifically to 23S rRNA; its binding is stimulated by other ribosomal proteins, e.g. L4, L17, and L20. It is important during the early stages of 50S assembly. It makes multiple contacts with different domains of the 23S rRNA in the assembled 50S subunit and ribosome. In terms of biological role, the globular domain of the protein is located near the polypeptide exit tunnel on the outside of the subunit, while an extended beta-hairpin is found that lines the wall of the exit tunnel in the center of the 70S ribosome. In Methylobacterium radiotolerans (strain ATCC 27329 / DSM 1819 / JCM 2831 / NBRC 15690 / NCIMB 10815 / 0-1), this protein is Large ribosomal subunit protein uL22.